We begin with the raw amino-acid sequence, 500 residues long: MNFFPWLTIIVVLPISAGSLIFFLPHRGNKAIRWYTICICLLELLLITYVFCYHFQLDDPLIQLEEDYKWINIFDFHWRLGIDGLSIGPILLTGFITTLATLAAWPITRDSRLFHFLMLAMYSGQIGSFSSRDLLLFFIMWELELIPVYLLLSMWGGKKRLYSATKFILYTAGGSIFLLMGVLGMGLYGSNEPTLNFETSANQSYPVALEIMFYFGFLIAYAVKSPIIPLHTWLPDTHGEAHYSTCMLLAGILLKMGAYGLVRINMELLPHAHSIFSPWLMIVGTIQIIYAASTSPGQRNLKKRIAYSSVSHMGFTIIGIGSITDAGLNGAVLQIISHGFIGAALFFLAGTSYDRIRLVYLDEMGGIAISMPKIFTMFSSFSMASLALPGMSGFVAELIVFFGIITSPKYFLMPKILITFVMAIGMILTPIYSLSMSRQMFYGYKLFNAPNSYFFDSGPRELFVSISIFLPVIGIGIYPDFVLSLSVDKVEAILSNYFYK.

14 helical membrane-spanning segments follow: residues F3–F23, I37–L57, I87–I107, L113–S130, L134–M154, F167–L187, A208–I228, H242–V262, A272–A292, I305–D325, G330–G350, L386–T406, I416–M436, and L462–V482.

It belongs to the complex I subunit 4 family.

It is found in the plastid. The protein resides in the chloroplast thylakoid membrane. The catalysed reaction is a plastoquinone + NADH + (n+1) H(+)(in) = a plastoquinol + NAD(+) + n H(+)(out). It carries out the reaction a plastoquinone + NADPH + (n+1) H(+)(in) = a plastoquinol + NADP(+) + n H(+)(out). This is NAD(P)H-quinone oxidoreductase chain 4, chloroplastic from Platanus occidentalis (Sycamore).